The chain runs to 181 residues: Inner membrane-spanning protein YciB (181 aa).

The next 5 membrane-spanning stretches (helical) occupy residues 8–28, 53–73, 76–96, 121–141, and 149–169; these read FPIICFFVAYKFWGIYIATAA, ITLIFILLLGSFTLVFHNAIF, WKPTIVYWIFAIVLFGSHFFG, LSWALFFLILGVLNLFVVYNF, and FKLFGTLVLMLVFILGQAFYI.

Belongs to the YciB family.

It localises to the cell inner membrane. Plays a role in cell envelope biogenesis, maintenance of cell envelope integrity and membrane homeostasis. The sequence is that of Inner membrane-spanning protein YciB from Coxiella burnetii (strain CbuG_Q212) (Coxiella burnetii (strain Q212)).